We begin with the raw amino-acid sequence, 390 residues long: S-adenosylmethionine synthase (390 aa).

An ATP-binding site is contributed by His-17. Asp-19 is a binding site for Mg(2+). Glu-45 contacts K(+). L-methionine-binding residues include Glu-58 and Gln-101. The segment at 101–111 is flexible loop; it reads QSPDIGQGVDT. ATP contacts are provided by residues 160 to 162, 226 to 227, Asp-235, 241 to 242, Ala-258, and Lys-262; these read DGK, RF, and RK. An L-methionine-binding site is contributed by Asp-235. Lys-266 contacts L-methionine.

Belongs to the AdoMet synthase family. As to quaternary structure, homotetramer; dimer of dimers. It depends on Mg(2+) as a cofactor. Requires K(+) as cofactor.

It is found in the cytoplasm. The enzyme catalyses L-methionine + ATP + H2O = S-adenosyl-L-methionine + phosphate + diphosphate. Its pathway is amino-acid biosynthesis; S-adenosyl-L-methionine biosynthesis; S-adenosyl-L-methionine from L-methionine: step 1/1. In terms of biological role, catalyzes the formation of S-adenosylmethionine (AdoMet) from methionine and ATP. The overall synthetic reaction is composed of two sequential steps, AdoMet formation and the subsequent tripolyphosphate hydrolysis which occurs prior to release of AdoMet from the enzyme. This chain is S-adenosylmethionine synthase, found in Anaeromyxobacter dehalogenans (strain 2CP-1 / ATCC BAA-258).